We begin with the raw amino-acid sequence, 977 residues long: Mineralocorticoid receptor (977 aa).

Positions 1-19 are enriched in basic and acidic residues; sequence METKGYHSRPEGLDMERRW. Disordered stretches follow at residues 1–37 and 231–288; these read METK…AERT and QGTP…VSSP. The tract at residues 1–601 is modulating; it reads METKGYHSRP…STGSSRPSKI (601 aa). The span at 231-243 shows a compositional bias: polar residues; that stretch reads QGTPLTCSPTVDN. Phosphoserine occurs at positions 250, 259, 283, 287, and 299. The segment covering 259–288 has biased composition (low complexity); the sequence is SPLSSPLSSMKSPISSPPSHCSVKSPVSSP. 2 disordered regions span residues 305-327 and 344-368; these read NSRC…SPAA and SGAS…KGAH. Zn(2+) is bound by residues C602, C605, C619, C622, C638, C644, C654, and C657. NR C4-type zinc fingers lie at residues 602–622 and 638–662; these read CLVC…CGSC and CAGR…LQKC. The segment at residues 602-667 is a DNA-binding region (nuclear receptor); that stretch reads CLVCGDGASG…RLQKCLQAGM (66 aa). A hinge region spans residues 668–718; it reads NLGARKSKKLGKLKGLHEEQPQQPPPPQSPEEGTTYIAPAKEPSVNTALVP. Residues 682–703 are disordered; the sequence is GLHEEQPQQPPPPQSPEEGTTY. In terms of domain architecture, NR LBD spans 719–957; it reads QLSSISRALT…EFPAMLVEII (239 aa). 21-hydroxyprogesterone contacts are provided by N763 and Q769. 2 residues coordinate aldosterone: N763 and Q769. The progesterone site is built by N763 and Q769. An important for coactivator binding region spans residues 775 to 778; that stretch reads KWAK. Residues R810 and T938 each contribute to the 21-hydroxyprogesterone site. Positions 810 and 938 each coordinate aldosterone. Residues R810 and T938 each coordinate progesterone.

Belongs to the nuclear hormone receptor family. NR3 subfamily.

The protein localises to the cytoplasm. The protein resides in the nucleus. Receptor for both mineralocorticoids (MC) such as aldosterone and glucocorticoids (GC) such as corticosterone or cortisol. Binds to mineralocorticoid response elements (MRE) and transactivates target genes. The effect of MC is to increase ion and water transport and thus raise extracellular fluid volume and blood pressure and lower potassium levels. The sequence is that of Mineralocorticoid receptor (NR3C2) from Tupaia belangeri (Common tree shrew).